Consider the following 877-residue polypeptide: Alanine--tRNA ligase (877 aa).

The Zn(2+) site is built by H567, H571, C669, and H673.

This sequence belongs to the class-II aminoacyl-tRNA synthetase family. Zn(2+) is required as a cofactor.

The protein resides in the cytoplasm. The enzyme catalyses tRNA(Ala) + L-alanine + ATP = L-alanyl-tRNA(Ala) + AMP + diphosphate. Its function is as follows. Catalyzes the attachment of alanine to tRNA(Ala) in a two-step reaction: alanine is first activated by ATP to form Ala-AMP and then transferred to the acceptor end of tRNA(Ala). Also edits incorrectly charged Ser-tRNA(Ala) and Gly-tRNA(Ala) via its editing domain. The chain is Alanine--tRNA ligase from Lactobacillus delbrueckii subsp. bulgaricus (strain ATCC 11842 / DSM 20081 / BCRC 10696 / JCM 1002 / NBRC 13953 / NCIMB 11778 / NCTC 12712 / WDCM 00102 / Lb 14).